The following is a 461-amino-acid chain: Phosphoglucosamine mutase (461 aa).

Catalysis depends on serine 113, which acts as the Phosphoserine intermediate. Positions 113, 251, 253, and 255 each coordinate Mg(2+). Serine 113 is subject to Phosphoserine.

The protein belongs to the phosphohexose mutase family. Requires Mg(2+) as cofactor. In terms of processing, activated by phosphorylation.

It carries out the reaction alpha-D-glucosamine 1-phosphate = D-glucosamine 6-phosphate. In terms of biological role, catalyzes the conversion of glucosamine-6-phosphate to glucosamine-1-phosphate. The sequence is that of Phosphoglucosamine mutase from Prochlorococcus marinus (strain SARG / CCMP1375 / SS120).